Consider the following 252-residue polypeptide: HTH-type transcriptional regulator XynR (252 aa).

An HTH iclR-type domain is found at 4-66 (IQSVERALQI…PENGKYRLGM (63 aa)). A DNA-binding region (H-T-H motif) is located at residues 25–45 (KITDISKLMGLSKSTLHSLLK). An IclR-ED domain is found at 81-250 (IRQKAKGWLT…GLALSRALGY (170 aa)).

Activity may be controlled by xylonate. Functionally, involved in regulation of xylonate catabolism. Represses the expression of both yagA and yagEF operons. Binds mainly at a single site within the spacer of the bidirectional transcription units yagA and yagEF. This Escherichia coli (strain K12) protein is HTH-type transcriptional regulator XynR.